We begin with the raw amino-acid sequence, 371 residues long: Succinyl-diaminopimelate desuccinylase (371 aa).

His68 is a Zn(2+) binding site. Asp70 is a catalytic residue. Asp99 contacts Zn(2+). The active-site Proton acceptor is Glu130. Residues Glu131, Glu159, and His344 each coordinate Zn(2+).

It belongs to the peptidase M20A family. DapE subfamily. In terms of assembly, homodimer. It depends on Zn(2+) as a cofactor. The cofactor is Co(2+).

It catalyses the reaction N-succinyl-(2S,6S)-2,6-diaminopimelate + H2O = (2S,6S)-2,6-diaminopimelate + succinate. The protein operates within amino-acid biosynthesis; L-lysine biosynthesis via DAP pathway; LL-2,6-diaminopimelate from (S)-tetrahydrodipicolinate (succinylase route): step 3/3. In terms of biological role, catalyzes the hydrolysis of N-succinyl-L,L-diaminopimelic acid (SDAP), forming succinate and LL-2,6-diaminopimelate (DAP), an intermediate involved in the bacterial biosynthesis of lysine and meso-diaminopimelic acid, an essential component of bacterial cell walls. The chain is Succinyl-diaminopimelate desuccinylase from Acidiphilium cryptum (strain JF-5).